A 46-amino-acid chain; its full sequence is Large ribosomal subunit protein bL33B (46 aa).

This sequence belongs to the bacterial ribosomal protein bL33 family.

This Mycoplasmopsis pulmonis (strain UAB CTIP) (Mycoplasma pulmonis) protein is Large ribosomal subunit protein bL33B (rpmG2).